Reading from the N-terminus, the 354-residue chain is Uroporphyrinogen decarboxylase (354 aa).

Substrate-binding positions include 27–31, D77, Y154, T209, and H327; that span reads RQAGR.

This sequence belongs to the uroporphyrinogen decarboxylase family. As to quaternary structure, homodimer.

It localises to the cytoplasm. It carries out the reaction uroporphyrinogen III + 4 H(+) = coproporphyrinogen III + 4 CO2. It functions in the pathway porphyrin-containing compound metabolism; protoporphyrin-IX biosynthesis; coproporphyrinogen-III from 5-aminolevulinate: step 4/4. Functionally, catalyzes the decarboxylation of four acetate groups of uroporphyrinogen-III to yield coproporphyrinogen-III. The polypeptide is Uroporphyrinogen decarboxylase (Escherichia coli (strain UTI89 / UPEC)).